The primary structure comprises 252 residues: Bidirectional sugar transporter SWEET3b (252 aa).

The Extracellular segment spans residues 1 to 8; it reads MVSNTIRV. A helical membrane pass occupies residues 9–29; the sequence is AVGILGNAASMLLYAAPILTF. The MtN3/slv 1 domain maps to 10 to 98; it reads VGILGNAASM…SIYTWFAPRE (89 aa). The Cytoplasmic portion of the chain corresponds to 30-43; that stretch reads RRVIKKGSVEEFSC. Residues 44–64 form a helical membrane-spanning segment; the sequence is VPYILALFNCLLYTWYGLPVV. Topologically, residues 65–75 are extracellular; that stretch reads SSGWENSTVSS. A glycan (N-linked (GlcNAc...) asparagine) is linked at asparagine 70. A helical membrane pass occupies residues 76–96; the sequence is INGLGILLEIAFISIYTWFAP. At 97–105 the chain is on the cytoplasmic side; the sequence is RERKKFVLR. The helical transmembrane segment at 106 to 126 threads the bilayer; sequence MVLPVLAFFALTAIFSSFLFH. At 127-132 the chain is on the extracellular side; sequence THGLRK. The helical transmembrane segment at 133–153 threads the bilayer; it reads VFVGSIGLVASISMYSSPMVA. The region spanning 134–219 is the MtN3/slv 2 domain; the sequence is FVGSIGLVAS…LYCIYRKSHK (86 aa). The Cytoplasmic portion of the chain corresponds to 154-167; the sequence is AKQVITTKSVEFMP. Residues 168–188 form a helical membrane-spanning segment; sequence FYLSLFSFLSSALWMIYGLLG. Topologically, residues 189 to 190 are extracellular; the sequence is KD. A helical membrane pass occupies residues 191-211; sequence LFIASPNFIGCPMGILQLVLY. Residues 212-252 are Cytoplasmic-facing; the sequence is CIYRKSHKEAEKLHDIDQENGLKVVTTHEKITGREPEAQRD.

Belongs to the SWEET sugar transporter family. As to quaternary structure, forms homooligomers and/or heterooligomers.

It is found in the cell membrane. In terms of biological role, mediates both low-affinity uptake and efflux of sugar across the plasma membrane. The chain is Bidirectional sugar transporter SWEET3b (SWEET3B) from Oryza sativa subsp. japonica (Rice).